We begin with the raw amino-acid sequence, 686 residues long: Methionine--tRNA ligase (686 aa).

The short motif at 22–32 (PYANGPIHLGH) is the 'HIGH' region element. Residues cysteine 153, cysteine 156, cysteine 166, and cysteine 169 each coordinate Zn(2+). The 'KMSKS' region motif lies at 337-341 (KMSKS). Lysine 340 provides a ligand contact to ATP. The segment at 547-573 (MLEDSKESTPAPAAAKPKKAATQKADA) is disordered. The tRNA-binding domain occupies 584 to 686 (DFLKVKLRVA…SGAEPGMEVR (103 aa)).

This sequence belongs to the class-I aminoacyl-tRNA synthetase family. MetG type 1 subfamily. In terms of assembly, homodimer. The cofactor is Zn(2+).

Its subcellular location is the cytoplasm. The catalysed reaction is tRNA(Met) + L-methionine + ATP = L-methionyl-tRNA(Met) + AMP + diphosphate. Is required not only for elongation of protein synthesis but also for the initiation of all mRNA translation through initiator tRNA(fMet) aminoacylation. This is Methionine--tRNA ligase from Alcanivorax borkumensis (strain ATCC 700651 / DSM 11573 / NCIMB 13689 / SK2).